The sequence spans 444 residues: Phosphoglucosamine mutase (444 aa).

The Phosphoserine intermediate role is filled by serine 102. Mg(2+) is bound by residues serine 102, aspartate 239, aspartate 241, and aspartate 243. Serine 102 bears the Phosphoserine mark.

The protein belongs to the phosphohexose mutase family. The cofactor is Mg(2+). In terms of processing, activated by phosphorylation.

It carries out the reaction alpha-D-glucosamine 1-phosphate = D-glucosamine 6-phosphate. Its function is as follows. Catalyzes the conversion of glucosamine-6-phosphate to glucosamine-1-phosphate. This chain is Phosphoglucosamine mutase, found in Mycolicibacterium paratuberculosis (strain ATCC BAA-968 / K-10) (Mycobacterium paratuberculosis).